Consider the following 287-residue polypeptide: Proline iminopeptidase (287 aa).

Positions 22–271 constitute an AB hydrolase-1 domain; the sequence is PLVLLHGGPG…RSRHMAFIDE (250 aa). Ser-98 functions as the Nucleophile in the catalytic mechanism. Asp-238 is a catalytic residue. His-265 functions as the Proton donor in the catalytic mechanism.

It belongs to the peptidase S33 family.

It is found in the cell envelope. The enzyme catalyses Release of N-terminal proline from a peptide.. Functionally, releases the N-terminal proline from various substrates. The polypeptide is Proline iminopeptidase (Lactiplantibacillus plantarum (strain ATCC BAA-793 / NCIMB 8826 / WCFS1) (Lactobacillus plantarum)).